The chain runs to 552 residues: Thermosome subunit beta (552 aa).

The interval Ala531–Asp552 is disordered. The span at Gly540–Asp552 shows a compositional bias: basic and acidic residues.

The protein belongs to the TCP-1 chaperonin family. As to quaternary structure, forms a heterooligomeric complex of two stacked nine-membered rings; one of alpha and the other of beta subunits. Sometimes called a 'rosettasome'.

It localises to the cytoplasm. It carries out the reaction ATP + H2O = ADP + phosphate + H(+). In terms of biological role, molecular chaperone; binds unfolded polypeptides in vitro, stimulates protein folding and has ATPase activity. One of the most abundant proteins in the cell at all temperatures. The chain is Thermosome subunit beta (thsB) from Saccharolobus shibatae (strain ATCC 51178 / DSM 5389 / JCM 8931 / NBRC 15437 / B12) (Sulfolobus shibatae).